Here is a 1246-residue protein sequence, read N- to C-terminus: DNA-directed RNA polymerase subunit beta (1246 aa).

Residues 1171 to 1246 (IDDDAGEMSL…EFDGYNDFKA (76 aa)) form a disordered region. Composition is skewed to acidic residues over residues 1202–1223 (DEEE…EDFE) and 1230–1240 (EYAEDDDEFDG).

The protein belongs to the RNA polymerase beta chain family. The RNAP catalytic core consists of 2 alpha, 1 beta, 1 beta' and 1 omega subunit. When a sigma factor is associated with the core the holoenzyme is formed, which can initiate transcription.

The catalysed reaction is RNA(n) + a ribonucleoside 5'-triphosphate = RNA(n+1) + diphosphate. DNA-dependent RNA polymerase catalyzes the transcription of DNA into RNA using the four ribonucleoside triphosphates as substrates. The polypeptide is DNA-directed RNA polymerase subunit beta (Alkaliphilus metalliredigens (strain QYMF)).